The primary structure comprises 441 residues: ATP-dependent protease ATPase subunit HslU (441 aa).

Residues Ile18, 60-65 (GVGKTE), Asp254, Glu319, and Arg391 contribute to the ATP site.

It belongs to the ClpX chaperone family. HslU subfamily. A double ring-shaped homohexamer of HslV is capped on each side by a ring-shaped HslU homohexamer. The assembly of the HslU/HslV complex is dependent on binding of ATP.

The protein resides in the cytoplasm. Functionally, ATPase subunit of a proteasome-like degradation complex; this subunit has chaperone activity. The binding of ATP and its subsequent hydrolysis by HslU are essential for unfolding of protein substrates subsequently hydrolyzed by HslV. HslU recognizes the N-terminal part of its protein substrates and unfolds these before they are guided to HslV for hydrolysis. The protein is ATP-dependent protease ATPase subunit HslU of Shewanella frigidimarina (strain NCIMB 400).